Reading from the N-terminus, the 434-residue chain is UPF0053 protein YrkA (434 aa).

Residues 1–201 enclose the CNNM transmembrane domain; that stretch reads MTTINLIIFT…YKSGEINQNE (201 aa). The next 3 membrane-spanning stretches (helical) occupy residues 7 to 27, 64 to 84, and 101 to 121; these read IIFT…FAIV, LGIT…FEVI, and VLIL…VGEL. 2 consecutive CBS domains span residues 220-282 and 289-346; these read MIPR…KIKE and HINP…IRDE.

Belongs to the UPF0053 family.

Its subcellular location is the cell membrane. This is UPF0053 protein YrkA (yrkA) from Bacillus subtilis (strain 168).